Consider the following 244-residue polypeptide: Tetraspanin-2A (244 aa).

At 1-22 (MGIGYGASDEQLEKQIGCVKYT) the chain is on the cytoplasmic side. Residues 23 to 43 (LFCFNIVAWMISTALFALTVW) traverse the membrane as a helical segment. Topologically, residues 44–61 (LRAEPGFNDWLRILEAQS) are extracellular. The helical transmembrane segment at 62–82 (FYIGVYVLIGISIVMMAVSFL) threads the bilayer. Residues 83-91 (GCLSALMEN) are Cytoplasmic-facing. Residues 92-112 (TLALFVFVGTQVFGFIAIVAG) form a helical membrane-spanning segment. Residues 113-206 (SAVLLQFSTI…TWFFEGKTGW (94 aa)) lie on the Extracellular side of the membrane. A helical membrane pass occupies residues 207-227 (IVALAMTLGLLNVICAVMSFV). Residues 228 to 244 (LVQAVKKEEEQASNYRR) are Cytoplasmic-facing.

The protein belongs to the tetraspanin (TM4SF) family. Forms a complex with Ssk and mesh.

The protein resides in the apicolateral cell membrane. Its subcellular location is the cell junction. It localises to the septate junction. Its function is as follows. Required for assembly of smooth septate junctions (sSJs), together with Ssk and mesh. Important for barrier function of the midgut epithelium. This is Tetraspanin-2A from Drosophila melanogaster (Fruit fly).